The sequence spans 517 residues: Crotonobetaine/carnitine--CoA ligase (517 aa).

It belongs to the ATP-dependent AMP-binding enzyme family.

It catalyses the reaction 4-(trimethylamino)butanoate + ATP + CoA = 4-(trimethylamino)butanoyl-CoA + AMP + diphosphate. It carries out the reaction crotonobetaine + ATP + CoA = crotonobetainyl-CoA + AMP + diphosphate. The catalysed reaction is (R)-carnitine + ATP + CoA = (R)-carnitinyl-CoA + AMP + diphosphate. It participates in amine and polyamine metabolism; carnitine metabolism. In terms of biological role, catalyzes the transfer of CoA to carnitine, generating the initial carnitinyl-CoA needed for the CaiB reaction cycle. Also has activity toward crotonobetaine and gamma-butyrobetaine. This chain is Crotonobetaine/carnitine--CoA ligase, found in Escherichia coli O157:H7.